The sequence spans 281 residues: 39kDa core protein OPG130 (281 aa).

Residues M1–Y22 are compositionally biased toward polar residues. Disordered regions lie at residues M1–K33, I91–D112, and N149–P192. The segment covering S24–K33 has biased composition (basic and acidic residues). Polar residues predominate over residues P94–D112. Residues T154–S175 show a composition bias toward low complexity.

It belongs to the orthopoxvirus OPG130 family. Interacts with OPG136 and its cleaved form. Post-translationally, its phosphorylation state is regulated by the OPG054 kinase and the OPG106 phosphatase.

It is found in the virion. It localises to the host endoplasmic reticulum-Golgi intermediate compartment membrane. Functionally, component of the virion core. Participates in virion assembly. This is 39kDa core protein OPG130 (OPG130) from Vaccinia virus (strain Copenhagen) (VACV).